We begin with the raw amino-acid sequence, 366 residues long: MISSFHRPTVARVNLQAIKENVASVQKHIPLGVKTYAVVKADAYGHGAVQVSKALLPQVDGYCVSNLDEALQLRQAGIDKEILILGVLLPNELELAVANAITVTIASLDWIALARLEKKECQGLKVHVKVDSGMGRIGLRSSKEVNLLIDSLKELGADVEGIFTHFATADEADDTKFNQQLQFFKKLIAGLEDKPRLVHASNSATSIWHSDTIFNAVRLGIVSYGLNPSGSDLSLPFPLQEALSLESSLVHVKMISAGDTVGYGVTYTAKKSEYVGTVPIGYADGWTRNMQGFSVLVDGQFCEIIGRVSMDQLTIRLSKAYPLGTKVTLIGSNQQKNISTTDIANYRNTINYEVLCLLSDRIPRIY.

Residue lysine 40 is the Proton acceptor; specific for D-alanine of the active site. Lysine 40 bears the N6-(pyridoxal phosphate)lysine mark. Arginine 136 contacts substrate. The active-site Proton acceptor; specific for L-alanine is tyrosine 263. Methionine 310 contacts substrate.

This sequence belongs to the alanine racemase family. The cofactor is pyridoxal 5'-phosphate.

It catalyses the reaction L-alanine = D-alanine. It functions in the pathway amino-acid biosynthesis; D-alanine biosynthesis; D-alanine from L-alanine: step 1/1. Functionally, catalyzes the interconversion of L-alanine and D-alanine. May also act on other amino acids. This chain is Alanine racemase (alr), found in Streptococcus pyogenes serotype M12 (strain MGAS2096).